The sequence spans 649 residues: Serine/threonine-protein kinase par-4 (649 aa).

Residues M1–T11 show a composition bias toward polar residues. The interval M1–Q132 is disordered. Residues N45 to P55 show a composition bias toward basic and acidic residues. 2 stretches are compositionally biased toward acidic residues: residues P64–E77 and D117–P129. The Protein kinase domain maps to Y197–F460. Residues I203 to V211 and K226 each bind ATP. Residue D324 is the Proton acceptor of the active site. Residues T548–S649 are disordered. The span at A597–A609 shows a compositional bias: low complexity.

The protein belongs to the protein kinase superfamily. CAMK Ser/Thr protein kinase family. LKB1 subfamily. The cofactor is Mg(2+). It depends on Mn(2+) as a cofactor.

Its subcellular location is the cytoplasm. It is found in the cell cortex. It catalyses the reaction L-seryl-[protein] + ATP = O-phospho-L-seryl-[protein] + ADP + H(+). The catalysed reaction is L-threonyl-[protein] + ATP = O-phospho-L-threonyl-[protein] + ADP + H(+). In terms of biological role, required for cytoplasmic partitioning and asymmetric cell division in early embryogenesis. Phosphorylates and restricts the asymmetry effectors mex-5 and mex-6 to the anterior cytoplasm of the zygote and maintains these phosphorylations until fertilization. Phosphorylates and regulates aak-2 in response to oxidative stress. May also play a role in motility, behavioral response, regulation of lifespan and dauer formation through this pathway. The polypeptide is Serine/threonine-protein kinase par-4 (Caenorhabditis briggsae).